The primary structure comprises 138 residues: Large ribosomal subunit protein uL16 (138 aa).

The segment covering 1-19 (MLSPKRTKYRKAHKGRIHG) has biased composition (basic residues). The segment at 1 to 21 (MLSPKRTKYRKAHKGRIHGNA) is disordered.

It belongs to the universal ribosomal protein uL16 family. Part of the 50S ribosomal subunit.

Functionally, binds 23S rRNA and is also seen to make contacts with the A and possibly P site tRNAs. This is Large ribosomal subunit protein uL16 from Granulibacter bethesdensis (strain ATCC BAA-1260 / CGDNIH1).